We begin with the raw amino-acid sequence, 157 residues long: MSQVILDLQLACENHAGLPDEAQFQRWLDGVIPQFQEEAEVTIRLVDEAESHDLNLTYRGKDKPTNVLSFPFEAPAGIEMPLLGDLIICRQVVEQEAQEQSKPLEAHWAHMVVHGSLHLLGYDHIDDDEAEEMESLETEIMLAMGYEDPYIAEKIAE.

3 residues coordinate Zn(2+): His-114, His-118, and His-124.

It belongs to the endoribonuclease YbeY family. Zn(2+) is required as a cofactor.

It localises to the cytoplasm. In terms of biological role, single strand-specific metallo-endoribonuclease involved in late-stage 70S ribosome quality control and in maturation of the 3' terminus of the 16S rRNA. The sequence is that of Endoribonuclease YbeY from Salmonella typhimurium (strain LT2 / SGSC1412 / ATCC 700720).